A 93-amino-acid polypeptide reads, in one-letter code: Co-chaperonin GroES (93 aa).

It belongs to the GroES chaperonin family. In terms of assembly, heptamer of 7 subunits arranged in a ring. Interacts with the chaperonin GroEL.

It localises to the cytoplasm. In terms of biological role, together with the chaperonin GroEL, plays an essential role in assisting protein folding. The GroEL-GroES system forms a nano-cage that allows encapsulation of the non-native substrate proteins and provides a physical environment optimized to promote and accelerate protein folding. GroES binds to the apical surface of the GroEL ring, thereby capping the opening of the GroEL channel. In Streptococcus sanguinis, this protein is Co-chaperonin GroES.